The sequence spans 152 residues: Probable flagellum biosynthesis repressor protein FlbT (152 aa).

The protein belongs to the FlbT family.

Functionally, has a post-transcriptional repressor function in flagellum biogenesis. Associates with the 5'-UTR of fljK mRNA and promotes its degradation. In Brucella abortus (strain S19), this protein is Probable flagellum biosynthesis repressor protein FlbT.